The chain runs to 131 residues: Small ribosomal subunit protein uS11 (131 aa).

This sequence belongs to the universal ribosomal protein uS11 family. In terms of assembly, part of the 30S ribosomal subunit. Interacts with proteins S7 and S18. Binds to IF-3.

Its function is as follows. Located on the platform of the 30S subunit, it bridges several disparate RNA helices of the 16S rRNA. Forms part of the Shine-Dalgarno cleft in the 70S ribosome. The polypeptide is Small ribosomal subunit protein uS11 (Deinococcus radiodurans (strain ATCC 13939 / DSM 20539 / JCM 16871 / CCUG 27074 / LMG 4051 / NBRC 15346 / NCIMB 9279 / VKM B-1422 / R1)).